An 831-amino-acid chain; its full sequence is Zinc transporter ZIP10 (831 aa).

The signal sequence occupies residues 1-25 (MKVHMHTKFCLICLLTFIFHHCNHC). Residues 126 to 318 (HNHQHSHNHL…RKREAPHVKN (193 aa)) form a disordered region. The segment covering 138 to 147 (ENQTVTSVST) has biased composition (polar residues). N-linked (GlcNAc...) asparagine glycosylation is present at Asn-139. Basic and acidic residues predominate over residues 152–171 (KCDPEKETVEVSVKSDDKHM). A compositionally biased stretch (basic residues) spans 172–188 (HDHNHRLRHHHRLHHHL). The segment covering 189 to 198 (DHNNTHHFHN) has biased composition (basic and acidic residues). 2 N-linked (GlcNAc...) asparagine glycosylation sites follow: Asn-198 and Asn-218. Over residues 211–221 (NEPSTETNKTQ) the composition is skewed to polar residues. The segment covering 229–238 (PKGKRKKKGR) has biased composition (basic residues). Composition is skewed to basic and acidic residues over residues 256 to 273 (DQGEQYEHNRVHKPDRVH) and 281 to 315 (HLPERNGHDPGRGHQDLDPDNEGELRHTRKREAPH). Asn-339 is a glycosylation site (N-linked (GlcNAc...) asparagine). The next 2 membrane-spanning stretches (helical) occupy residues 411–431 (IISITVISLLSLLGVILVPII) and 438–458 (FLLTFLVALAVGTMSGDALLH). Residues 464–484 (QGGHDHSHQHAHGHGHSHGHE) are disordered. Residues 495-515 (VLKGLVALGGIYLLFIIEHCI) traverse the membrane as a helical segment. 2 positions are modified to phosphothreonine: Thr-536 and Thr-553. Ser-591 is modified (phosphoserine). The next 4 helical transmembrane spans lie at 687-707 (AIGAAFSAGLTGGISTSIAVF), 732-752 (IVYNLLSAMMAYIGMLIGTAV), 759-779 (ITLWIFAVTAGMFLYVALVDM), and 801-821 (FILQNLGLLFGFAIMLVIALY).

Belongs to the ZIP transporter (TC 2.A.5) family. Interacts with SLC39A6; which triggers cells to undergo EMT and mitosis. Found in a complex with SLC39A6, SLC39A10 and with the 'Ser-727' phosphorylated form of STAT3 throughout mitosis. Found in a complex with SLC39A6, SLC39A10 and with NCAM1; this complex controls NCAM1 phosphorylation and integration into focal adhesion complexes during epithelial-tomesenchymal transition. Found in a complex with SLC39A6, SLC39A10 and with GSK3B that controls NCAM1 phosphorylation. Undergoes N-terminal ectodomain shedding.

It is found in the cell membrane. It localises to the apical cell membrane. It catalyses the reaction Zn(2+)(in) = Zn(2+)(out). Zinc-influx transporter. When associated with SLC39A6, the heterodimer formed by SLC39A10 and SLC39A6 mediates cellular zinc uptake to trigger cells to undergo epithelial-to-mesenchymal transition (EMT). SLC39A10-SLC39A6 heterodimers play also an essentiel role in initiating mitosis by importing zinc into cells to initiate a pathway resulting in the onset of mitosis. Plays an important for both mature B-cell maintenance and humoral immune responses. When associated with SLC39A10, the heterodimer controls NCAM1 phosphorylation and integration into focal adhesion complexes during EMT. The chain is Zinc transporter ZIP10 from Homo sapiens (Human).